A 738-amino-acid chain; its full sequence is Photosystem I P700 chlorophyll a apoprotein A2 (738 aa).

Transmembrane regions (helical) follow at residues 46–69 (LFST…FHIA), 135–158 (LYQG…LHLQ), 175–199 (LNHH…HVAI), 273–291 (IAHH…GHMY), 333–356 (LHFQ…QHMY), 372–398 (AALY…IFFI), 420–442 (AIIS…LYVH), and 521–539 (FLVH…LILV). [4Fe-4S] cluster contacts are provided by Cys-563 and Cys-572. 2 helical membrane passes run 579-600 (AFYL…YWHW) and 647-669 (LAVW…MFLI). Residues His-658, Met-666, and Tyr-674 each contribute to the chlorophyll a site. Residue Trp-675 coordinates phylloquinone. The helical transmembrane segment at 711-731 (VVGLAHFTIGYILTYAAFLIA) threads the bilayer.

The protein belongs to the PsaA/PsaB family. The PsaA/B heterodimer binds the P700 chlorophyll special pair and subsequent electron acceptors. PSI consists of a core antenna complex that captures photons, and an electron transfer chain that converts photonic excitation into a charge separation. The cyanobacterial PSI reaction center is composed of one copy each of PsaA,B,C,D,E,F,I,J,K,L,M and X, and forms trimeric complexes. PSI electron transfer chain: 5 chlorophyll a, 1 chlorophyll a', 2 phylloquinones and 3 4Fe-4S clusters. PSI core antenna: 90 chlorophyll a, 22 carotenoids, 3 phospholipids and 1 galactolipid. P700 is a chlorophyll a/chlorophyll a' dimer, A0 is one or more chlorophyll a, A1 is one or both phylloquinones and FX is a shared 4Fe-4S iron-sulfur center. is required as a cofactor.

The protein localises to the cellular thylakoid membrane. It catalyses the reaction reduced [plastocyanin] + hnu + oxidized [2Fe-2S]-[ferredoxin] = oxidized [plastocyanin] + reduced [2Fe-2S]-[ferredoxin]. PsaA and PsaB bind P700, the primary electron donor of photosystem I (PSI), as well as the electron acceptors A0, A1 and FX. PSI is a plastocyanin/cytochrome c6-ferredoxin oxidoreductase, converting photonic excitation into a charge separation, which transfers an electron from the donor P700 chlorophyll pair to the spectroscopically characterized acceptors A0, A1, FX, FA and FB in turn. Oxidized P700 is reduced on the lumenal side of the thylakoid membrane by plastocyanin or cytochrome c6. The protein is Photosystem I P700 chlorophyll a apoprotein A2 of Synechococcus sp. (strain WH7803).